Consider the following 51-residue polypeptide: Large ribosomal subunit protein eL39 (51 aa).

A disordered region spans residues 1–22 (MPSQKSFRTKQKLAKAQKQNRP).

This sequence belongs to the eukaryotic ribosomal protein eL39 family. As to quaternary structure, interacts with YIH1.

The chain is Large ribosomal subunit protein eL39 (RPL39) from Debaryomyces hansenii (strain ATCC 36239 / CBS 767 / BCRC 21394 / JCM 1990 / NBRC 0083 / IGC 2968) (Yeast).